Here is a 384-residue protein sequence, read N- to C-terminus: Guanine nucleotide-binding protein alpha-2 subunit (384 aa).

The disordered stretch occupies residues 1–23 (MGLVCSRNRRYRDSDPEENAQAA). Residue Gly2 is the site of N-myristoyl glycine attachment. Cys5 carries S-palmitoyl cysteine lipidation. A G-alpha domain is found at 38–384 (HIQKLLLLGA…RRNLFEAGLL (347 aa)). The tract at residues 41 to 54 (KLLLLGAGESGKST) is G1 motif. Residues Glu49, Ser50, Gly51, Lys52, Ser53, Thr54, Asp163, Leu188, Tyr189, Thr194, Gly222, Asn288, Lys289, Asp291, and Ala356 each contribute to the GTP site. Ser53 lines the Mg(2+) pocket. The G2 motif stretch occupies residues 186 to 194 (DVLYARVRT). Mg(2+) is bound at residue Thr194. The interval 215–224 (YRLFDVGGQR) is G3 motif. Residues 284–291 (MLFLNKFD) are G4 motif. The segment at 354 to 359 (TTALDQ) is G5 motif.

This sequence belongs to the G-alpha family. In terms of assembly, g proteins are composed of 3 units; alpha, beta and gamma. The alpha chain contains the guanine nucleotide binding site. Mg(2+) is required as a cofactor.

In terms of biological role, guanine nucleotide-binding proteins (G proteins) are involved as modulators or transducers in various transmembrane signaling systems. The polypeptide is Guanine nucleotide-binding protein alpha-2 subunit (GPA2) (Pisum sativum (Garden pea)).